The primary structure comprises 363 residues: MKGLILVGGYGTRLRPLTLTLPKPLVEFGNKPMILHQVESLAAAGVKDIVLAVNYRPEVMIETLKKYEEKYGVNITFSVETEPLGTAGPLKLAEEILCKDDTPFFVLNSDVICDYPFAELAEFHKKNNAEATIVATKVEEPSKYGVIVHKQGTSKIDRFVEKPVEFVGNRINAGIYILNPSVVDLIDLRPTSIEKETFPQLAARESLYSFDLEGYWMDVGQPKDFLSGTCLYLSSLSKKNPEALVPTSEPYVTGGNVLVDPTAKISPQAKIGPNVVIGPGAVIGEGARLSRCVVLANSTIKPHAFVKNSIIGWNGRVGRWARIENVSVFGDDVEVKDEVYVNGGRVLPHKTISGNIEKPEIIM.

This sequence belongs to the transferase hexapeptide repeat family.

Its subcellular location is the cytoplasm. The enzyme catalyses alpha-D-mannose 1-phosphate + GTP + H(+) = GDP-alpha-D-mannose + diphosphate. It participates in nucleotide-sugar biosynthesis; GDP-alpha-D-mannose biosynthesis; GDP-alpha-D-mannose from alpha-D-mannose 1-phosphate (GTP route): step 1/1. Its function is as follows. Involved in cell wall synthesis where it is required for glycosylation. Involved in cell cycle progression through cell-size checkpoint. This chain is Mannose-1-phosphate guanyltransferase (MPG1), found in Yarrowia lipolytica (strain CLIB 122 / E 150) (Yeast).